We begin with the raw amino-acid sequence, 272 residues long: Bis(5'-nucleosyl)-tetraphosphatase, symmetrical (272 aa).

Belongs to the Ap4A hydrolase family.

The enzyme catalyses P(1),P(4)-bis(5'-adenosyl) tetraphosphate + H2O = 2 ADP + 2 H(+). Functionally, hydrolyzes diadenosine 5',5'''-P1,P4-tetraphosphate to yield ADP. This is Bis(5'-nucleosyl)-tetraphosphatase, symmetrical from Glaesserella parasuis serovar 5 (strain SH0165) (Haemophilus parasuis).